The chain runs to 891 residues: Targeting protein for Xklp2 homolog (891 aa).

Residues 42 to 54 show a composition bias toward basic and acidic residues; it reads HENGVPLTFDDKA. Disordered regions lie at residues 42–310, 418–454, 472–518, 723–746, and 789–891; these read HENG…KSCP, NLRKYVPSPSKPQGITKPRPFNFSDNRKRTHEESFSG, HTKT…NRHR, CSGVPDKKVKPPTQMAPFSVAEKG, and STKP…SHTS. The span at 108 to 124 shows a compositional bias: polar residues; sequence DDVSSAESETCEMSTDS. A compositionally biased stretch (acidic residues) spans 141-154; that stretch reads DDEATVQESSDAEE. Residues 155–173 are compositionally biased toward polar residues; sequence TQTLPSSCVDSSTAEMSTD. A compositionally biased stretch (basic residues) spans 236-246; sequence PTRKSPRLHSR. Residues 442 to 454 show a composition bias toward basic and acidic residues; the sequence is DNRKRTHEESFSG. The span at 791 to 802 shows a compositional bias: polar residues; that stretch reads KPMTDISNFSLN. 2 stretches are compositionally biased toward basic and acidic residues: residues 803–822 and 831–852; these read TERRAEDRKGYEQAKYERQL and REAEKEEELRQQISKQRADSIH.

It belongs to the TPX2 family. As to expression, detectable in immature oocytes.

The protein resides in the nucleus. It localises to the cytoplasm. It is found in the cytoskeleton. Its subcellular location is the spindle. In terms of biological role, spindle assembly factor. Required for normal assembly of mitotic spindles. The polypeptide is Targeting protein for Xklp2 homolog (Patiria pectinifera (Starfish)).